A 472-amino-acid polypeptide reads, in one-letter code: Glutamate--tRNA ligase (472 aa).

Positions Pro-18–Gly-28 match the 'HIGH' region motif. Positions Arg-122–Pro-138 are enriched in basic and acidic residues. The disordered stretch occupies residues Arg-122–Gln-150. The 'KMSKS' region signature appears at Lys-250–Arg-254. Position 253 (Lys-253) interacts with ATP.

Belongs to the class-I aminoacyl-tRNA synthetase family. Glutamate--tRNA ligase type 1 subfamily. In terms of assembly, monomer.

It is found in the cytoplasm. It catalyses the reaction tRNA(Glu) + L-glutamate + ATP = L-glutamyl-tRNA(Glu) + AMP + diphosphate. In terms of biological role, catalyzes the attachment of glutamate to tRNA(Glu) in a two-step reaction: glutamate is first activated by ATP to form Glu-AMP and then transferred to the acceptor end of tRNA(Glu). In Thiobacillus denitrificans (strain ATCC 25259 / T1), this protein is Glutamate--tRNA ligase.